The primary structure comprises 110 residues: Large ribosomal subunit protein P2B (110 aa).

Positions 73 to 88 (TPAAGGAAGAEATSAA) are enriched in low complexity. The disordered stretch occupies residues 73-110 (TPAAGGAAGAEATSAAEEAKEEEAAEESDEDMGFGLFD). The span at 91-104 (AKEEEAAEESDEDM) shows a compositional bias: acidic residues. At serine 100 the chain carries Phosphoserine.

This sequence belongs to the eukaryotic ribosomal protein P1/P2 family. In terms of assembly, component of the large ribosomal subunit (LSU). Mature yeast ribosomes consist of a small (40S) and a large (60S) subunit. The 40S small subunit contains 1 molecule of ribosomal RNA (18S rRNA) and at least 33 different proteins. The large 60S subunit contains 3 rRNA molecules (25S, 5.8S and 5S rRNA) and at least 46 different proteins. The acidic ribosomal P-proteins form the stalk structure of the 60S subunit. They are organized as a pentameric complex in which uL10/P0 interacts with 2 heterodimers of P1 and P2 proteins.

It is found in the cytoplasm. Functionally, component of the ribosome, a large ribonucleoprotein complex responsible for the synthesis of proteins in the cell. The small ribosomal subunit (SSU) binds messenger RNAs (mRNAs) and translates the encoded message by selecting cognate aminoacyl-transfer RNA (tRNA) molecules. The large subunit (LSU) contains the ribosomal catalytic site termed the peptidyl transferase center (PTC), which catalyzes the formation of peptide bonds, thereby polymerizing the amino acids delivered by tRNAs into a polypeptide chain. The nascent polypeptides leave the ribosome through a tunnel in the LSU and interact with protein factors that function in enzymatic processing, targeting, and the membrane insertion of nascent chains at the exit of the ribosomal tunnel. The chain is Large ribosomal subunit protein P2B (rpp202) from Schizosaccharomyces pombe (strain 972 / ATCC 24843) (Fission yeast).